A 95-amino-acid polypeptide reads, in one-letter code: Aspartyl/glutamyl-tRNA(Asn/Gln) amidotransferase subunit C (95 aa).

The protein belongs to the GatC family. In terms of assembly, heterotrimer of A, B and C subunits.

The enzyme catalyses L-glutamyl-tRNA(Gln) + L-glutamine + ATP + H2O = L-glutaminyl-tRNA(Gln) + L-glutamate + ADP + phosphate + H(+). It catalyses the reaction L-aspartyl-tRNA(Asn) + L-glutamine + ATP + H2O = L-asparaginyl-tRNA(Asn) + L-glutamate + ADP + phosphate + 2 H(+). Functionally, allows the formation of correctly charged Asn-tRNA(Asn) or Gln-tRNA(Gln) through the transamidation of misacylated Asp-tRNA(Asn) or Glu-tRNA(Gln) in organisms which lack either or both of asparaginyl-tRNA or glutaminyl-tRNA synthetases. The reaction takes place in the presence of glutamine and ATP through an activated phospho-Asp-tRNA(Asn) or phospho-Glu-tRNA(Gln). This Geobacter sulfurreducens (strain ATCC 51573 / DSM 12127 / PCA) protein is Aspartyl/glutamyl-tRNA(Asn/Gln) amidotransferase subunit C.